A 418-amino-acid polypeptide reads, in one-letter code: Glutamyl-tRNA reductase (418 aa).

Substrate is bound by residues 49–52, S107, 112–114, and Q118; these read TCNR and EPQ. Residue C50 is the Nucleophile of the active site. An NADP(+)-binding site is contributed by 187–192; it reads GAGETI.

The protein belongs to the glutamyl-tRNA reductase family. In terms of assembly, homodimer.

It catalyses the reaction (S)-4-amino-5-oxopentanoate + tRNA(Glu) + NADP(+) = L-glutamyl-tRNA(Glu) + NADPH + H(+). Its pathway is porphyrin-containing compound metabolism; protoporphyrin-IX biosynthesis; 5-aminolevulinate from L-glutamyl-tRNA(Glu): step 1/2. In terms of biological role, catalyzes the NADPH-dependent reduction of glutamyl-tRNA(Glu) to glutamate 1-semialdehyde (GSA). In Pseudoalteromonas translucida (strain TAC 125), this protein is Glutamyl-tRNA reductase.